Here is a 239-residue protein sequence, read N- to C-terminus: 2-C-methyl-D-erythritol 4-phosphate cytidylyltransferase (239 aa).

This sequence belongs to the IspD/TarI cytidylyltransferase family. IspD subfamily.

It catalyses the reaction 2-C-methyl-D-erythritol 4-phosphate + CTP + H(+) = 4-CDP-2-C-methyl-D-erythritol + diphosphate. It participates in isoprenoid biosynthesis; isopentenyl diphosphate biosynthesis via DXP pathway; isopentenyl diphosphate from 1-deoxy-D-xylulose 5-phosphate: step 2/6. Its function is as follows. Catalyzes the formation of 4-diphosphocytidyl-2-C-methyl-D-erythritol from CTP and 2-C-methyl-D-erythritol 4-phosphate (MEP). This is 2-C-methyl-D-erythritol 4-phosphate cytidylyltransferase from Ruthia magnifica subsp. Calyptogena magnifica.